An 846-amino-acid polypeptide reads, in one-letter code: SLIT and NTRK-like protein 2 (846 aa).

The first 21 residues, 1-21, serve as a signal peptide directing secretion; it reads MLSGVWFLSVLTVAGILQTES. Topologically, residues 22 to 622 are extracellular; it reads RKTAKDICKI…LHTEVPLSVL (601 aa). 2 cysteine pairs are disulfide-bonded: cysteine 29-cysteine 35 and cysteine 33-cysteine 46. 6 LRR repeats span residues 63-84, 87-108, 111-132, 135-156, 159-180, and 182-203; these read RIYQ…EFVN, NAVT…AFSG, TLKR…TFLG, SLEY…AFSK, KLKV…VFRF, and LLTH…GVLE. An N-linked (GlcNAc...) asparagine glycan is attached at asparagine 84. Residues 167–215 are required for interaction with PTPRD; that stretch reads DNLLLSLPSNVFRFVLLTHLDLRGNRLKVMPFAGVLEHIGGIMEIQLEE. The 50-residue stretch at 216-265 folds into the LRRCT 1 domain; the sequence is NPWNCTCDLLPLKAWLDTITVFVGEIVCETPFRLHGKDVTQLTRQDLCPR. Asparagine 219 is a glycosylation site (N-linked (GlcNAc...) asparagine). Intrachain disulfides connect cysteine 220/cysteine 243 and cysteine 222/cysteine 263. The interval 261-322 is disordered; the sequence is DLCPRKSASG…TPRVTVSKDR (62 aa). Low complexity-rich tracts occupy residues 267 to 276 and 285 to 300; these read SASGDSSQRS and RLTP…TRAP. An LRRNT domain is found at 332-374; sequence QTKSPVALTCPSSCVCTSQSSDNGLNVNCQERKFTNISDLQPK. LRR repeat units lie at residues 377–398, 401–422, 425–446, 449–470, 473–494, and 496–517; these read SPKK…DLLE, SLDL…AFTN, SLRR…MFDG, SLQY…TFDA, NLQL…IFGG, and ALTR…GVLD. N-linked (GlcNAc...) asparagine glycosylation occurs at asparagine 422. One can recognise an LRRCT 2 domain in the interval 530-581; sequence NPWDCTCDIMGLKDWTEHANSPVIINEVTCESPAKHAGEILKFLGREAICPE. Residues 623–643 form a helical membrane-spanning segment; sequence ILGLLVVFILSVCFGAGLFVF. Over 644–846 the chain is Cytoplasmic; that stretch reads VLKRRKGVPN…LEKQTAISQL (203 aa). Tyrosine 757 is subject to Phosphotyrosine.

It belongs to the SLITRK family. As to quaternary structure, interacts with PTPRD; this interaction is PTPRD splicing-dependent and may induce pre-synaptic differentiation. Interacts with NTRK2. In the adult, significant expression is detected only in the brain. Broadly expressed in embryonic brain with highest expression in ventricular layer, subventricular zone, cortical plate, pyramidal layer of hippocampus, subicular neuroepithelium, thalamus, hypothalamus and spinal cord.

Its subcellular location is the membrane. The protein localises to the cell membrane. The protein resides in the cell projection. It localises to the dendrite. In terms of biological role, it is involved in synaptogenesis. Promotes excitatory synapse differentiation. Suppresses neurite outgrowth. Involved in the negative regulation of NTRK2. The polypeptide is SLIT and NTRK-like protein 2 (Slitrk2) (Mus musculus (Mouse)).